The chain runs to 603 residues: UvrABC system protein C (603 aa).

One can recognise a GIY-YIG domain in the interval 15–92; sequence DKPGCYLMKN…IQKHQPYFNI (78 aa). The 36-residue stretch at 197-232 folds into the UVR domain; sequence ATVKRQLTKKMQRAAENMEFERAAEIRDQLHYIEVT.

This sequence belongs to the UvrC family. As to quaternary structure, interacts with UvrB in an incision complex.

The protein localises to the cytoplasm. In terms of biological role, the UvrABC repair system catalyzes the recognition and processing of DNA lesions. UvrC both incises the 5' and 3' sides of the lesion. The N-terminal half is responsible for the 3' incision and the C-terminal half is responsible for the 5' incision. This chain is UvrABC system protein C, found in Limosilactobacillus reuteri (strain DSM 20016) (Lactobacillus reuteri).